A 905-amino-acid polypeptide reads, in one-letter code: Cadherin-2B (905 aa).

A signal peptide spans 1–28 (MCRKQPFLLPTLLGILAALMLQQGPVEA). Residues 29-160 (FGGSRLCKTG…NSNGLQRQKR (132 aa)) constitute a propeptide that is removed on maturation. Cadherin domains are found at residues 161–268 (DWVI…RPEF), 269–383 (LHQI…PPEF), 384–498 (TAMT…NPYF), 499–604 (TPNP…DNAP), and 605–713 (YVYP…TTAP). Residues 161–723 (DWVIPPINVP…IIGTGLGTGA (563 aa)) lie on the Extracellular side of the membrane. Glu-171 lines the Ca(2+) pocket. Asn-191 is a glycosylation site (N-linked (GlcNAc...) asparagine). Ca(2+)-binding residues include Asp-227, Glu-229, Asp-260, Met-261, Asn-262, Asp-263, and Asn-264. N-linked (GlcNAc...) asparagine glycosylation occurs at Asn-274. 3 residues coordinate Ca(2+): Asp-294, Asp-296, and Asn-302. N-linked (GlcNAc...) asparagine glycosylation occurs at Asn-326. Residue Asp-354 participates in Ca(2+) binding. 5 N-linked (GlcNAc...) asparagine glycosylation sites follow: Asn-403, Asn-573, Asn-623, Asn-651, and Asn-692. Residues 724–745 (IIAILLCIIILLTLVLMFVVWM) form a helical membrane-spanning segment. Topologically, residues 746-905 (KRRDKERQAK…LADMYGGSDD (160 aa)) are cytoplasmic. Disordered stretches follow at residues 774 to 800 (EEGG…PDTI) and 862 to 883 (SGST…EQDY). A compositionally biased stretch (acidic residues) spans 775–784 (EGGGEEDQDY). Over residues 862 to 879 (SGSTAGSLSSLNSSSSGG) the composition is skewed to low complexity.

As to quaternary structure, homodimer (via extracellular region). Can also form heterodimers with other cadherins (via extracellular region). Dimerization occurs in trans, i.e. with a cadherin chain from another cell.

The protein resides in the cell membrane. It is found in the sarcolemma. It localises to the cell junction. The protein localises to the cell surface. Its subcellular location is the desmosome. The protein resides in the adherens junction. Calcium-dependent cell adhesion protein; preferentially mediates homotypic cell-cell adhesion. Cadherins may thus contribute to the sorting of heterogeneous cell types, and thereby play an important role during embryonic development. Required for proper neurite branching. Required for pre- and postsynaptic organization. The protein is Cadherin-2B (cdh2-b) of Xenopus laevis (African clawed frog).